The sequence spans 1269 residues: Protein cramped-like (1269 aa).

Residues 1–12 (MTVKLGDGGSGE) are compositionally biased toward gly residues. Positions 1-165 (MTVKLGDGGS…GKKVRRQWES (165 aa)) are disordered. 2 stretches are compositionally biased toward basic and acidic residues: residues 13 to 24 (DGLKKLGKRAAD) and 43 to 52 (SGTKRDEKTP). The segment covering 59 to 74 (PPAPPGAPQAPSPPQG) has biased composition (pro residues). The span at 105–123 (GNAGGSGPRGKGAEGGGSS) shows a compositional bias: gly residues. Residues 124–147 (SGNVSGVAPAAPAGGSRSSSRNLG) are compositionally biased toward low complexity. Positions 151 to 165 (GEKEEGKKVRRQWES) are enriched in basic and acidic residues. Residues 161–224 (RQWESWSTED…FYYRTWHKIT (64 aa)) form the SANT domain. Ser307 carries the phosphoserine modification. Disordered stretches follow at residues 450–541 (IQSG…PGAL), 581–666 (DTRP…EVPA), 757–827 (VRPA…NDSD), 976–1034 (EGLS…DSFQ), 1055–1092 (IPLS…SQGE), and 1115–1157 (VPLS…PSDS). Residues 485–507 (SSGESSPESAPGEGAALSLSSPD) show a composition bias toward low complexity. Composition is skewed to basic and acidic residues over residues 508-518 (APDRPPPRHQD) and 526-535 (TPAEGRDSPT). Polar residues-rich tracts occupy residues 757 to 767 (VRPAQEEQSMT), 774 to 806 (TVSS…SSGL), and 982 to 1002 (SPLS…TGTH). Low complexity-rich tracts occupy residues 1055-1070 (IPLS…LSPP) and 1125-1140 (SDSS…SPQP). The residue at position 1268 (Ser1268) is a Phosphoserine.

It belongs to the cramped family.

The protein localises to the nucleus. In Homo sapiens (Human), this protein is Protein cramped-like.